The following is a 767-amino-acid chain: Slo-interacting protein 1 (767 aa).

Residues Gln-202–Leu-280 enclose the PDZ domain. 2 disordered regions span residues Gly-521 to Glu-557 and Lys-744 to Gln-767. Positions Asn-532 to Pro-555 are enriched in polar residues. Positions Lys-744 to Arg-755 are enriched in basic and acidic residues.

In terms of assembly, interacts with Slo. As to expression, in embryos, it is expressed throughout the CNS and in several peripheral locations. Colocalizes with Slo.

May selectively reduce calcium-activated potassium channel (Slo) currents by reducing the number of Slo channels in the plasma membrane. The sequence is that of Slo-interacting protein 1 (Slip1) from Drosophila melanogaster (Fruit fly).